Here is a 284-residue protein sequence, read N- to C-terminus: MSAAISRNWPAPAKLNLFLHINGRRTDGYHELQTLFQFIDYCDMLDFKVTDSSELILHSNMAGVVADSDNLILRAAKSLQQMTSFKGGAEIWLDKRLPMGGGLGGGSSDAATTLVALNTLWNTQLSTEELAKIGLKLGADIPVFIHGFAAFAEGIGERLQVVSPPEPWYLVIAPDAHVSTAEVFQDPLLPRNTPKLAIDTLMSQAWINDCQKLVVSKYPQVAKALGWLLEYAPSRMTGTGACVFGEFTQQQQALAALAKLPSDMQGFVAKGMNISPLITRLNHP.

The active site involves lysine 14. 98-108 (PMGGGLGGGSS) is a binding site for ATP. The active site involves aspartate 140.

This sequence belongs to the GHMP kinase family. IspE subfamily.

The enzyme catalyses 4-CDP-2-C-methyl-D-erythritol + ATP = 4-CDP-2-C-methyl-D-erythritol 2-phosphate + ADP + H(+). It participates in isoprenoid biosynthesis; isopentenyl diphosphate biosynthesis via DXP pathway; isopentenyl diphosphate from 1-deoxy-D-xylulose 5-phosphate: step 3/6. Catalyzes the phosphorylation of the position 2 hydroxy group of 4-diphosphocytidyl-2C-methyl-D-erythritol. This is 4-diphosphocytidyl-2-C-methyl-D-erythritol kinase from Shewanella sp. (strain W3-18-1).